The sequence spans 600 residues: Elongation factor 4 (600 aa).

The tr-type G domain occupies Lys5 to Lys187. Residues Asp17–Thr22 and Asn134–Asp137 contribute to the GTP site.

The protein belongs to the TRAFAC class translation factor GTPase superfamily. Classic translation factor GTPase family. LepA subfamily.

The protein localises to the cell inner membrane. It catalyses the reaction GTP + H2O = GDP + phosphate + H(+). Its function is as follows. Required for accurate and efficient protein synthesis under certain stress conditions. May act as a fidelity factor of the translation reaction, by catalyzing a one-codon backward translocation of tRNAs on improperly translocated ribosomes. Back-translocation proceeds from a post-translocation (POST) complex to a pre-translocation (PRE) complex, thus giving elongation factor G a second chance to translocate the tRNAs correctly. Binds to ribosomes in a GTP-dependent manner. This is Elongation factor 4 from Rickettsia conorii (strain ATCC VR-613 / Malish 7).